A 245-amino-acid polypeptide reads, in one-letter code: MKKLVAVTSMILTTFSVQAADLYLYAGAGLKEPVEKIIHQYEQETGNKVTVEYGGSGQILARYNTVKSGDLFLAGSEDYVTKLQKTNDVNNIGTIVLHVPVMAIRKDKISGIDSFKALAESSLRLGIGDSKAMALGKGAEKMFELSGYQKQLNDKIVVKAATVKQLMLYLLNGDVDAAVVGRSGAWKVRDKVELLPSPKGTPEEKVTIGLLFSSKYPKEAQQLFDFFKSPQGVKYFTDEGFLPAK.

The N-terminal stretch at 1–19 (MKKLVAVTSMILTTFSVQA) is a signal peptide. 2 residues coordinate molybdate: serine 56 and valine 163.

The protein belongs to the bacterial solute-binding protein ModA family.

It localises to the periplasm. Functionally, probably involved in the binding-dependent system. This is Putative binding protein HI_1525 from Haemophilus influenzae (strain ATCC 51907 / DSM 11121 / KW20 / Rd).